Reading from the N-terminus, the 240-residue chain is 1-(5-phosphoribosyl)-5-[(5-phosphoribosylamino)methylideneamino] imidazole-4-carboxamide isomerase (240 aa).

Aspartate 10 acts as the Proton acceptor in catalysis. The active-site Proton donor is the aspartate 131.

It belongs to the HisA/HisF family.

Its subcellular location is the cytoplasm. The enzyme catalyses 1-(5-phospho-beta-D-ribosyl)-5-[(5-phospho-beta-D-ribosylamino)methylideneamino]imidazole-4-carboxamide = 5-[(5-phospho-1-deoxy-D-ribulos-1-ylimino)methylamino]-1-(5-phospho-beta-D-ribosyl)imidazole-4-carboxamide. The protein operates within amino-acid biosynthesis; L-histidine biosynthesis; L-histidine from 5-phospho-alpha-D-ribose 1-diphosphate: step 4/9. This Shouchella clausii (strain KSM-K16) (Alkalihalobacillus clausii) protein is 1-(5-phosphoribosyl)-5-[(5-phosphoribosylamino)methylideneamino] imidazole-4-carboxamide isomerase.